Here is a 602-residue protein sequence, read N- to C-terminus: Sulfite reductase [NADPH] hemoprotein beta-component (602 aa).

Residues 1-15 show a composition bias toward basic and acidic residues; it reads MDDHKTASPPRERSY. The tract at residues 1–24 is disordered; the sequence is MDDHKTASPPRERSYETPPAERPI. Residues cysteine 458, cysteine 464, cysteine 503, and cysteine 507 each coordinate [4Fe-4S] cluster. Residue cysteine 507 participates in siroheme binding.

The protein belongs to the nitrite and sulfite reductase 4Fe-4S domain family. Alpha(8)-beta(8). The alpha component is a flavoprotein, the beta component is a hemoprotein. Requires siroheme as cofactor. The cofactor is [4Fe-4S] cluster.

The catalysed reaction is hydrogen sulfide + 3 NADP(+) + 3 H2O = sulfite + 3 NADPH + 4 H(+). Its pathway is sulfur metabolism; hydrogen sulfide biosynthesis; hydrogen sulfide from sulfite (NADPH route): step 1/1. In terms of biological role, component of the sulfite reductase complex that catalyzes the 6-electron reduction of sulfite to sulfide. This is one of several activities required for the biosynthesis of L-cysteine from sulfate. The chain is Sulfite reductase [NADPH] hemoprotein beta-component from Methylobacterium nodulans (strain LMG 21967 / CNCM I-2342 / ORS 2060).